The primary structure comprises 307 residues: Protoheme IX farnesyltransferase (307 aa).

The next 9 membrane-spanning stretches (helical) occupy residues 28 to 48 (LVIFTGICGLLAAPGAINPIL), 50 to 70 (FTAILCIAMGAGGSAALNQWW), 99 to 117 (FGILISVASVGIMGIAINW), 121 to 138 (IILAAAIVYYAVIYTIWL), 146 to 166 (IVIGGGAGAFPPMIGWVAVTG), 173 to 193 (VLLFAIIFMWTPPHFWALALF), 219 to 239 (ILVYSILLIPFAVAPWAIGAT), 241 to 261 (AIYGVSALLLTGAFAALSVPV), and 278 to 298 (LFGFSILYLFALFAALVADRY).

The protein belongs to the UbiA prenyltransferase family. Protoheme IX farnesyltransferase subfamily.

It is found in the cell inner membrane. The catalysed reaction is heme b + (2E,6E)-farnesyl diphosphate + H2O = Fe(II)-heme o + diphosphate. It functions in the pathway porphyrin-containing compound metabolism; heme O biosynthesis; heme O from protoheme: step 1/1. In terms of biological role, converts heme B (protoheme IX) to heme O by substitution of the vinyl group on carbon 2 of heme B porphyrin ring with a hydroxyethyl farnesyl side group. This is Protoheme IX farnesyltransferase from Erythrobacter litoralis (strain HTCC2594).